Here is a 148-residue protein sequence, read N- to C-terminus: Antitoxin Xre (148 aa).

The protein belongs to the MbcA/ParS/Xre antitoxin family. Homodimer. Forms a complex with cognate toxin Rse.

Its function is as follows. Antitoxin component of a type II toxin-antitoxin (TA) system. Neutralizes the activity of cognate toxin Res. This chain is Antitoxin Xre, found in Yersinia enterocolitica serotype O:8 / biotype 1B (strain NCTC 13174 / 8081).